Reading from the N-terminus, the 398-residue chain is Ribosomal RNA large subunit methyltransferase I (398 aa).

Residues 2 to 79 (SVRLVLAKGR…LSESIDIAFF (78 aa)) form the PUA domain.

It belongs to the methyltransferase superfamily. RlmI family.

Its subcellular location is the cytoplasm. It carries out the reaction cytidine(1962) in 23S rRNA + S-adenosyl-L-methionine = 5-methylcytidine(1962) in 23S rRNA + S-adenosyl-L-homocysteine + H(+). Specifically methylates the cytosine at position 1962 (m5C1962) of 23S rRNA. This chain is Ribosomal RNA large subunit methyltransferase I, found in Shigella dysenteriae serotype 1 (strain Sd197).